Consider the following 444-residue polypeptide: Phosphoglucosamine mutase (444 aa).

Ser-102 acts as the Phosphoserine intermediate in catalysis. Ser-102, Asp-241, Asp-243, and Asp-245 together coordinate Mg(2+). Position 102 is a phosphoserine (Ser-102).

It belongs to the phosphohexose mutase family. The cofactor is Mg(2+). Post-translationally, activated by phosphorylation.

The enzyme catalyses alpha-D-glucosamine 1-phosphate = D-glucosamine 6-phosphate. In terms of biological role, catalyzes the conversion of glucosamine-6-phosphate to glucosamine-1-phosphate. The chain is Phosphoglucosamine mutase from Acidovorax sp. (strain JS42).